Reading from the N-terminus, the 490-residue chain is Subtilisin-like protease 8 (490 aa).

Positions 1-26 (MKGLLSLSVLPVLAYASPMIVDSIHQ) are cleaved as a signal peptide. The propeptide occupies 27–134 (NAAPILSSTN…YIERDSEVHT (108 aa)). Positions 43–134 (SYIVVFKKGV…YIERDSEVHT (92 aa)) constitute an Inhibitor I9 domain. Residues 144–450 (PWGLARISHR…GGSDDYKKII (307 aa)) form the Peptidase S8 domain. Active-site charge relay system residues include D180 and H212. N282 carries N-linked (GlcNAc...) asparagine glycosylation. S378 (charge relay system) is an active-site residue. N-linked (GlcNAc...) asparagine glycosylation is present at N456.

This sequence belongs to the peptidase S8 family.

It localises to the secreted. In terms of biological role, secreted subtilisin-like serine protease with keratinolytic activity that contributes to pathogenicity. The sequence is that of Subtilisin-like protease 8 (SUB8) from Arthroderma benhamiae (strain ATCC MYA-4681 / CBS 112371) (Trichophyton mentagrophytes).